A 170-amino-acid chain; its full sequence is Peptide deformylase (170 aa).

Fe cation is bound by residues Cys91 and His133. Residue Glu134 is part of the active site. His137 contributes to the Fe cation binding site.

The protein belongs to the polypeptide deformylase family. Fe(2+) is required as a cofactor.

The enzyme catalyses N-terminal N-formyl-L-methionyl-[peptide] + H2O = N-terminal L-methionyl-[peptide] + formate. Functionally, removes the formyl group from the N-terminal Met of newly synthesized proteins. Requires at least a dipeptide for an efficient rate of reaction. N-terminal L-methionine is a prerequisite for activity but the enzyme has broad specificity at other positions. In Pasteurella multocida (strain Pm70), this protein is Peptide deformylase.